A 249-amino-acid polypeptide reads, in one-letter code: MHLGHEEFQRTDGRASTGPADAGPAGAGRAPRIGVGGPVGSGKTALVAALCRALSSSLRIGVVTNDIYTTEDADFLRRAGVLDPERIRAVETGCCPHTAIRDDITANLDMVEDLEADTGPLDLVLVESGGDNLTATFSYGLIDRQIFVVDVAGGDKVPRKGGPGVTGSDLLVINKTDLAPLVGADLDVMARDATAARGARPVVFTSLTADPTAADVTAWVRAQLAELSPRGGSYDASDASNASQPLNRM.

The segment covering 1 to 13 (MHLGHEEFQRTDG) has biased composition (basic and acidic residues). Positions 1 to 34 (MHLGHEEFQRTDGRASTGPADAGPAGAGRAPRIG) are disordered. The span at 18–33 (GPADAGPAGAGRAPRI) shows a compositional bias: low complexity. 37 to 44 (GPVGSGKT) contacts GTP. The segment at 229–249 (PRGGSYDASDASNASQPLNRM) is disordered. The segment covering 238–249 (DASNASQPLNRM) has biased composition (polar residues).

This sequence belongs to the SIMIBI class G3E GTPase family. UreG subfamily. In terms of assembly, homodimer. UreD, UreF and UreG form a complex that acts as a GTP-hydrolysis-dependent molecular chaperone, activating the urease apoprotein by helping to assemble the nickel containing metallocenter of UreC. The UreE protein probably delivers the nickel.

It is found in the cytoplasm. Facilitates the functional incorporation of the urease nickel metallocenter. This process requires GTP hydrolysis, probably effectuated by UreG. In Frankia casuarinae (strain DSM 45818 / CECT 9043 / HFP020203 / CcI3), this protein is Urease accessory protein UreG.